Here is a 154-residue protein sequence, read N- to C-terminus: Large ribosomal subunit protein uL13 (154 aa).

The protein belongs to the universal ribosomal protein uL13 family. Part of the 50S ribosomal subunit.

Its function is as follows. This protein is one of the early assembly proteins of the 50S ribosomal subunit, although it is not seen to bind rRNA by itself. It is important during the early stages of 50S assembly. The protein is Large ribosomal subunit protein uL13 of Bradyrhizobium diazoefficiens (strain JCM 10833 / BCRC 13528 / IAM 13628 / NBRC 14792 / USDA 110).